The primary structure comprises 177 residues: Cytoglobin-1 (177 aa).

The region spanning 16–165 (PLTDKERVMI…LCCSIKAVYE (150 aa)) is the Globin domain. Heme b-binding residues include H79 and H111.

The protein belongs to the globin family. As to quaternary structure, monomeric.

The protein resides in the cytoplasm. Its subcellular location is the nucleus. It catalyses the reaction Fe(II)-heme b-[protein] + nitric oxide + O2 = Fe(III)-heme b-[protein] + nitrate. The enzyme catalyses Fe(III)-heme b-[protein] + nitric oxide + H2O = Fe(II)-heme b-[protein] + nitrite + 2 H(+). It carries out the reaction 2 superoxide + 2 H(+) = H2O2 + O2. The catalysed reaction is H2O2 + AH2 = A + 2 H2O. In terms of biological role, probable multifunctional globin with a hexacoordinated heme iron required for the catalysis of various reactions depending on redox condition of the cell as well as oxygen availability. Has a nitric oxide dioxygenase (NOD) activity and is most probably involved in cell-mediated and oxygen-dependent nitric oxide consumption. Under normoxic conditions functions as a nitric oxide dioxygenase (NOD) but under hypoxic conditions the globin may switch its function to that of a nitrite (NO2) reductase (NiR), generating nitric oxide. Could also have peroxidase and superoxide dismutase activities, detoxifying reactive oxygen species and protecting cells against oxidative stress. Also binds dioxygen with low affinity and could function as an oxygen sensor but has probably no function as a respiratory oxygen carrier. This Oryzias latipes (Japanese rice fish) protein is Cytoglobin-1.